We begin with the raw amino-acid sequence, 285 residues long: Putative quercetin 2,3-dioxygenase PA3240 (285 aa).

4 residues coordinate a divalent metal cation: His60, His62, His104, and Glu106.

The protein belongs to the pirin family. A divalent metal cation serves as cofactor.

The enzyme catalyses quercetin + O2 = 2-(3,4-dihydroxybenzoyloxy)-4,6-dihydroxybenzoate + CO. It functions in the pathway flavonoid metabolism; quercetin degradation. In terms of biological role, putative quercetin 2,3-dioxygenase. In Pseudomonas aeruginosa (strain ATCC 15692 / DSM 22644 / CIP 104116 / JCM 14847 / LMG 12228 / 1C / PRS 101 / PAO1), this protein is Putative quercetin 2,3-dioxygenase PA3240.